Consider the following 118-residue polypeptide: Small ribosomal subunit protein uS13 (118 aa).

Residues Leu95–Lys118 are disordered.

Belongs to the universal ribosomal protein uS13 family. As to quaternary structure, part of the 30S ribosomal subunit. Forms a loose heterodimer with protein S19. Forms two bridges to the 50S subunit in the 70S ribosome.

Located at the top of the head of the 30S subunit, it contacts several helices of the 16S rRNA. In the 70S ribosome it contacts the 23S rRNA (bridge B1a) and protein L5 of the 50S subunit (bridge B1b), connecting the 2 subunits; these bridges are implicated in subunit movement. Contacts the tRNAs in the A and P-sites. The sequence is that of Small ribosomal subunit protein uS13 from Blochmanniella floridana.